A 593-amino-acid polypeptide reads, in one-letter code: UvrABC system protein C (593 aa).

Residues 14-91 (DSPGCYLHKD…IQENMPKYNI (78 aa)) form the GIY-YIG domain. Positions 196–231 (NKIVNGLTEKMKSAAMTMEFERAAEYRDLIEAISLL) constitute a UVR domain.

It belongs to the UvrC family. Interacts with UvrB in an incision complex.

The protein resides in the cytoplasm. Functionally, the UvrABC repair system catalyzes the recognition and processing of DNA lesions. UvrC both incises the 5' and 3' sides of the lesion. The N-terminal half is responsible for the 3' incision and the C-terminal half is responsible for the 5' incision. This is UvrABC system protein C from Streptococcus agalactiae serotype Ia (strain ATCC 27591 / A909 / CDC SS700).